Consider the following 107-residue polypeptide: Iron-binding protein IscA (107 aa).

3 residues coordinate Fe cation: cysteine 35, cysteine 99, and cysteine 101.

Belongs to the HesB/IscA family. As to quaternary structure, homodimer; may form tetramers and higher multimers. Fe cation serves as cofactor.

In terms of biological role, is able to transfer iron-sulfur clusters to apo-ferredoxin. Multiple cycles of [2Fe2S] cluster formation and transfer are observed, suggesting that IscA acts catalytically. Recruits intracellular free iron so as to provide iron for the assembly of transient iron-sulfur cluster in IscU in the presence of IscS, L-cysteine and the thioredoxin reductase system TrxA/TrxB. In Cronobacter sakazakii (strain ATCC BAA-894) (Enterobacter sakazakii), this protein is Iron-binding protein IscA.